The primary structure comprises 100 residues: Nucleoid-associated protein Rcas_2292 (100 aa).

It belongs to the YbaB/EbfC family. As to quaternary structure, homodimer.

It is found in the cytoplasm. The protein localises to the nucleoid. In terms of biological role, binds to DNA and alters its conformation. May be involved in regulation of gene expression, nucleoid organization and DNA protection. In Roseiflexus castenholzii (strain DSM 13941 / HLO8), this protein is Nucleoid-associated protein Rcas_2292.